The following is a 129-amino-acid chain: MKSVQLCLLLWCWRAICCRSCELTNITIAVEKEECRFCVSINTTWCAGYCYTRDLVYKDPARPNTQKVCTFKELVYETVRLPGCAHHSDSFYTYPVATECHCSKCDSHSTDCTVRGLGPSYCSFGEMKE.

The first 18 residues, Met-1–Cys-18, serve as a signal peptide directing secretion. Disulfide bonds link Cys-21-Cys-69, Cys-35-Cys-84, Cys-38-Cys-122, Cys-46-Cys-100, Cys-50-Cys-102, and Cys-105-Cys-112. Residues Asn-25 and Asn-42 are each glycosylated (N-linked (GlcNAc...) asparagine).

The protein belongs to the glycoprotein hormones subunit beta family. In terms of assembly, heterodimer. The active follitropin is a heterodimer composed of an alpha chain/CGA shared with other hormones and a unique beta chain/FSHB shown here.

The protein localises to the secreted. Together with the alpha chain CGA constitutes follitropin, the follicle-stimulating hormone, and provides its biological specificity to the hormone heterodimer. Binds FSHR, a G protein-coupled receptor, on target cells to activate downstream signaling pathways. Follitropin is involved in follicle development and spermatogenesis in reproductive organs. The polypeptide is Follitropin subunit beta (FSHB) (Meriones unguiculatus (Mongolian jird)).